The primary structure comprises 194 residues: Ras-related protein Rab-22A (194 aa).

12–20 (GDTGVGKSS) serves as a coordination point for GTP. Residues 34 to 42 (INPTIGASF) carry the Effector region motif. GTP is bound by residues 60–64 (DTAGQ), 118–121 (NKCD), and 148–150 (SAK). The tract at residues 174–194 (PSGGKGFKLRRQPSEPKRSCC) is disordered. Residues 185–194 (QPSEPKRSCC) show a composition bias toward basic and acidic residues. Residues Cys193 and Cys194 are each lipidated (S-geranylgeranyl cysteine).

This sequence belongs to the small GTPase superfamily. Rab family. As to quaternary structure, interacts directly with ZFYVE20. Binds EEA1. Interacts (in its GTP-bound form) with RABGEF1. Interacts (in its GTP-bound form) with RINL.

It localises to the endosome membrane. The protein resides in the cell membrane. It is found in the early endosome. Its subcellular location is the late endosome. The protein localises to the cell projection. It localises to the ruffle. The protein resides in the cytoplasmic vesicle. It is found in the phagosome. Its subcellular location is the phagosome membrane. Its function is as follows. Plays a role in endocytosis and intracellular protein transport. Mediates trafficking of TF from early endosomes to recycling endosomes. Required for NGF-mediated endocytosis of NTRK1, and subsequent neurite outgrowth. Binds GTP and GDP and has low GTPase activity. Alternates between a GTP-bound active form and a GDP-bound inactive form. In Homo sapiens (Human), this protein is Ras-related protein Rab-22A (RAB22A).